The sequence spans 1548 residues: Multidrug resistance protein (1548 aa).

The Cytoplasmic portion of the chain corresponds to 1–238 (MVDNGHVTIA…YHVWAQILPK (238 aa)). The 284-residue stretch at 231-514 (VWAQILPKLL…IPIIISSILQ (284 aa)) folds into the ABC transmembrane type-1 1 domain. Residues 239–256 (LLSDVTALMLPVLLEYFV) form a helical membrane-spanning segment. The N-linked (GlcNAc...) asparagine glycan is linked to Asn-263. 5 consecutive transmembrane segments (helical) span residues 266-287 (WGWGLGLALTIFLTNVIQSCSA), 349-367 (VMYFWSAPLQLVLCLLLLI), 375-392 (VPGMAVLFVTLPLQAVIS), 463-480 (ATPTLVIAVVFILYHVSG), and 500-519 (VSFFMIPIIISSILQCFVSA). Residues 520 to 932 (KRVTAFIECP…PWSTYVAYLK (413 aa)) are Cytoplasmic-facing. Residues 634 to 855 (VEEGDREYYQ…ALEETLRGEL (222 aa)) form the ABC transporter 1 domain. 667 to 674 (GSTGSGKS) is an ATP binding site. The next 4 membrane-spanning stretches (helical) occupy residues 933–950 (SCGGLEAWGCLLATFALT), 975–993 (TYLYVYLFIVFLEIFGSPL), 1051–1070 (GYLYLLEYFFSMCSTVIIMV), and 1072–1088 (VQPFVLVAIVPCVYSYY). Residues 940 to 1221 (WGCLLATFAL…LVRQVAMVEA (282 aa)) enclose the ABC transmembrane type-1 2 domain. Asn-1095 and Asn-1154 each carry an N-linked (GlcNAc...) asparagine glycan. Transmembrane regions (helical) follow at residues 1164 to 1182 (LEFLSCVVTFMVAFIGVIG) and 1186 to 1205 (GASSQNIGLISLSLTMSMTL). Over 1206 to 1548 (TETLNWLVRQ…RIVQPAVLSD (343 aa)) the chain is Cytoplasmic. One can recognise an ABC transporter 2 domain in the interval 1286 to 1521 (LVLEGVQMRY…HQSMFHSMVE (236 aa)). An ATP-binding site is contributed by 1320-1327 (GRTGSGKS).

This sequence belongs to the ABC transporter superfamily. ABCB family. Multidrug resistance exporter (TC 3.A.1.201) subfamily.

It is found in the membrane. It catalyses the reaction ATP + H2O + xenobioticSide 1 = ADP + phosphate + xenobioticSide 2.. This is Multidrug resistance protein (PGPA) from Leishmania tarentolae (Sauroleishmania tarentolae).